Reading from the N-terminus, the 79-residue chain is Ketoisovalerate oxidoreductase subunit VorC (79 aa).

2 consecutive 4Fe-4S ferredoxin-type domains span residues 4-33 (AYPV…MSNK) and 40-70 (HYVE…VHIE). Residues Cys-13, Cys-16, Cys-19, Cys-23, Cys-49, Cys-52, Cys-55, and Cys-59 each contribute to the [4Fe-4S] cluster site.

Heterotrimer of the VorA, VorB and VorC subunits. [4Fe-4S] cluster is required as a cofactor.

It carries out the reaction 3-methyl-2-oxobutanoate + 2 oxidized [2Fe-2S]-[ferredoxin] + CoA = 2-methylpropanoyl-CoA + 2 reduced [2Fe-2S]-[ferredoxin] + CO2 + H(+). The sequence is that of Ketoisovalerate oxidoreductase subunit VorC (vorC) from Methanothermobacter marburgensis (strain ATCC BAA-927 / DSM 2133 / JCM 14651 / NBRC 100331 / OCM 82 / Marburg) (Methanobacterium thermoautotrophicum).